The following is a 257-amino-acid chain: Small ribosomal subunit protein uS2 (257 aa).

A disordered region spans residues Met237–Glu257. The span at Ala240–Glu257 shows a compositional bias: acidic residues.

Belongs to the universal ribosomal protein uS2 family.

The polypeptide is Small ribosomal subunit protein uS2 (Chlorobium phaeovibrioides (strain DSM 265 / 1930) (Prosthecochloris vibrioformis (strain DSM 265))).